A 206-amino-acid chain; its full sequence is Peptidyl-tRNA hydrolase (206 aa).

Position 19 (tyrosine 19) interacts with tRNA. Histidine 24 functions as the Proton acceptor in the catalytic mechanism. TRNA contacts are provided by tyrosine 70, asparagine 72, and asparagine 118.

Belongs to the PTH family. In terms of assembly, monomer.

Its subcellular location is the cytoplasm. The catalysed reaction is an N-acyl-L-alpha-aminoacyl-tRNA + H2O = an N-acyl-L-amino acid + a tRNA + H(+). In terms of biological role, hydrolyzes ribosome-free peptidyl-tRNAs (with 1 or more amino acids incorporated), which drop off the ribosome during protein synthesis, or as a result of ribosome stalling. Functionally, catalyzes the release of premature peptidyl moieties from peptidyl-tRNA molecules trapped in stalled 50S ribosomal subunits, and thus maintains levels of free tRNAs and 50S ribosomes. This Prochlorococcus marinus (strain MIT 9303) protein is Peptidyl-tRNA hydrolase.